The sequence spans 428 residues: D-amino acid dehydrogenase (428 aa).

Residue 3-17 (VVILGSGVVGVASAY) coordinates FAD.

This sequence belongs to the DadA oxidoreductase family. Requires FAD as cofactor.

It catalyses the reaction a D-alpha-amino acid + A + H2O = a 2-oxocarboxylate + AH2 + NH4(+). It functions in the pathway amino-acid degradation; D-alanine degradation; NH(3) and pyruvate from D-alanine: step 1/1. Its function is as follows. Oxidative deamination of D-amino acids. The chain is D-amino acid dehydrogenase from Burkholderia thailandensis (strain ATCC 700388 / DSM 13276 / CCUG 48851 / CIP 106301 / E264).